The following is a 207-amino-acid chain: Methylated-DNA--protein-cysteine methyltransferase (207 aa).

Cys5 serves as a coordination point for Zn(2+). Ser14 carries the post-translational modification Phosphoserine. The Zn(2+) site is built by Cys24, His29, and His85. 5 residues coordinate DNA: Thr95, Tyr114, Gln115, Asn123, and Arg128. The Nucleophile; methyl group acceptor role is filled by Cys145. Residue Ser151 participates in DNA binding. Position 201 is a phosphoserine (Ser201).

This sequence belongs to the MGMT family. Zn(2+) serves as cofactor.

Its subcellular location is the nucleus. The enzyme catalyses a 6-O-methyl-2'-deoxyguanosine in DNA + L-cysteinyl-[protein] = S-methyl-L-cysteinyl-[protein] + a 2'-deoxyguanosine in DNA. It carries out the reaction a 4-O-methyl-thymidine in DNA + L-cysteinyl-[protein] = a thymidine in DNA + S-methyl-L-cysteinyl-[protein]. In terms of biological role, involved in the cellular defense against the biological effects of O6-methylguanine (O6-MeG) and O4-methylthymine (O4-MeT) in DNA. Repairs the methylated nucleobase in DNA by stoichiometrically transferring the methyl group to a cysteine residue in the enzyme. This is a suicide reaction: the enzyme is irreversibly inactivated. The chain is Methylated-DNA--protein-cysteine methyltransferase (MGMT) from Homo sapiens (Human).